The sequence spans 288 residues: Urease accessory protein UreD (288 aa).

This sequence belongs to the UreD family. UreD, UreF and UreG form a complex that acts as a GTP-hydrolysis-dependent molecular chaperone, activating the urease apoprotein by helping to assemble the nickel containing metallocenter of UreC. The UreE protein probably delivers the nickel.

It is found in the cytoplasm. Functionally, required for maturation of urease via the functional incorporation of the urease nickel metallocenter. The polypeptide is Urease accessory protein UreD (Dechloromonas aromatica (strain RCB)).